The following is a 200-amino-acid chain: Protein GrpE (200 aa).

Positions 1–11 (MSNQTNKAQDN) are enriched in polar residues. The segment at 1 to 25 (MSNQTNKAQDNQVEEIVEGELLNEN) is disordered.

Belongs to the GrpE family. Homodimer.

It localises to the cytoplasm. Its function is as follows. Participates actively in the response to hyperosmotic and heat shock by preventing the aggregation of stress-denatured proteins, in association with DnaK and GrpE. It is the nucleotide exchange factor for DnaK and may function as a thermosensor. Unfolded proteins bind initially to DnaJ; upon interaction with the DnaJ-bound protein, DnaK hydrolyzes its bound ATP, resulting in the formation of a stable complex. GrpE releases ADP from DnaK; ATP binding to DnaK triggers the release of the substrate protein, thus completing the reaction cycle. Several rounds of ATP-dependent interactions between DnaJ, DnaK and GrpE are required for fully efficient folding. This Shewanella pealeana (strain ATCC 700345 / ANG-SQ1) protein is Protein GrpE.